The primary structure comprises 103 residues: Small ribosomal subunit protein uS10 (103 aa).

This sequence belongs to the universal ribosomal protein uS10 family. As to quaternary structure, part of the 30S ribosomal subunit.

In terms of biological role, involved in the binding of tRNA to the ribosomes. The chain is Small ribosomal subunit protein uS10 from Aromatoleum aromaticum (strain DSM 19018 / LMG 30748 / EbN1) (Azoarcus sp. (strain EbN1)).